A 254-amino-acid polypeptide reads, in one-letter code: Precorrin-3B C(17)-methyltransferase (254 aa).

This sequence belongs to the precorrin methyltransferase family.

The catalysed reaction is precorrin-3B + S-adenosyl-L-methionine = precorrin-4 + S-adenosyl-L-homocysteine + 3 H(+). It functions in the pathway cofactor biosynthesis; adenosylcobalamin biosynthesis; cob(II)yrinate a,c-diamide from precorrin-2 (aerobic route): step 3/10. Methyltransferase that catalyzes the methylation of C-17 in precorrin-3B to form precorrin-4. In Sinorhizobium sp, this protein is Precorrin-3B C(17)-methyltransferase (cobJ).